The primary structure comprises 232 residues: Rho-related GTP-binding protein Rho6 (232 aa).

GTP contacts are provided by residues 23-28 (QCGKTA), 38-45 (YPETYVPT), 67-71 (DTSGS), 125-128 (CKTD), and 169-170 (AF). The Effector region signature appears at 42-50 (YVPTVFENY). Cysteine methyl ester is present on cysteine 229. The S-geranylgeranyl cysteine moiety is linked to residue cysteine 229. The propeptide at 230–232 (SIM) is removed in mature form.

The protein belongs to the small GTPase superfamily. Rho family. As to quaternary structure, binds GRB7 and PLXNB1. Interacts with PLXNA2. Interacts with UBXD5.

The protein resides in the cell membrane. The protein localises to the cytoplasm. Its subcellular location is the cytoskeleton. In terms of biological role, lacks intrinsic GTPase activity. Has a low affinity for GDP, and constitutively binds GTP. Controls rearrangements of the actin cytoskeleton. Induces the Rac-dependent neuritic process formation in part by disruption of the cortical actin filaments. Causes the formation of many neuritic processes from the cell body with disruption of the cortical actin filaments. This is Rho-related GTP-binding protein Rho6 (Rnd1) from Mus musculus (Mouse).